The primary structure comprises 605 residues: uncharacterized protein (605 aa).

The helical transmembrane segment at 56–78 (ILWSSIAAACVILFAAYKTGAYF) threads the bilayer.

The protein localises to the cell membrane. This is an uncharacterized protein from Bacillus subtilis (strain 168).